Reading from the N-terminus, the 171-residue chain is O-acetyl-ADP-ribose deacetylase 1 (171 aa).

The region spanning 1–171 (MKKITVIQGD…NYDLYLKLLN (171 aa)) is the Macro domain. Residues 10–11 (DI), asparagine 24, 32–34 (GVD), and 121–125 (STGIY) contribute to the substrate site. Aspartate 34 serves as the catalytic Proton acceptor.

Belongs to the MacroD-type family. YmdB subfamily. In terms of assembly, homodimer. Interacts with RNase III.

It catalyses the reaction 3''-O-acetyl-ADP-D-ribose + H2O = ADP-D-ribose + acetate + H(+). The enzyme catalyses 2''-O-acetyl-ADP-D-ribose + H2O = ADP-D-ribose + acetate + H(+). In terms of biological role, deacetylates O-acetyl-ADP ribose to yield ADP-ribose and free acetate. Down-regulates ribonuclease 3 (RNase III) activity. Acts by interacting directly with the region of the ribonuclease that is required for dimerization/activation. This Pantoea vagans (strain C9-1) (Pantoea agglomerans (strain C9-1)) protein is O-acetyl-ADP-ribose deacetylase 1.